Reading from the N-terminus, the 82-residue chain is Hepcidin (82 aa).

Residues M1 to G23 form the signal peptide. Residues S24–Q53 constitute a propeptide that is removed on maturation. 4 disulfide bridges follow: C64–C80, C67–C70, C68–C76, and C71–C79.

This sequence belongs to the hepcidin family. In terms of assembly, interacts with SLC40A1; this interaction promotes SLC40A1 rapid ubiquitination.

It is found in the secreted. In terms of biological role, liver-produced hormone that constitutes the main circulating regulator of iron absorption and distribution across tissues. Acts by promoting endocytosis and degradation of ferroportin/SLC40A1, leading to the retention of iron in iron-exporting cells and decreased flow of iron into plasma. Controls the major flows of iron into plasma: absorption of dietary iron in the intestine, recycling of iron by macrophages, which phagocytose old erythrocytes and other cells, and mobilization of stored iron from hepatocytes. Its function is as follows. Has strong antimicrobial activity against E.coli ML35P N.cinerea and weaker against S.epidermidis, S.aureus and group b streptococcus bacteria. Active against the fungus C.albicans. No activity against P.aeruginosa. The sequence is that of Hepcidin (HAMP) from Sus scrofa (Pig).